Here is a 368-residue protein sequence, read N- to C-terminus: tRNA-specific 2-thiouridylase MnmA (368 aa).

ATP contacts are provided by residues 6-13 (ALSGGVDS) and M32. C92 serves as the catalytic Nucleophile. C92 and C186 are oxidised to a cystine. Residue G116 coordinates ATP. Residues 134–136 (KDQ) are interaction with tRNA. C186 serves as the catalytic Cysteine persulfide intermediate. Residues 292–293 (RY) are interaction with tRNA.

The protein belongs to the MnmA/TRMU family.

Its subcellular location is the cytoplasm. It carries out the reaction S-sulfanyl-L-cysteinyl-[protein] + uridine(34) in tRNA + AH2 + ATP = 2-thiouridine(34) in tRNA + L-cysteinyl-[protein] + A + AMP + diphosphate + H(+). In terms of biological role, catalyzes the 2-thiolation of uridine at the wobble position (U34) of tRNA, leading to the formation of s(2)U34. This Campylobacter hominis (strain ATCC BAA-381 / DSM 21671 / CCUG 45161 / LMG 19568 / NCTC 13146 / CH001A) protein is tRNA-specific 2-thiouridylase MnmA.